Consider the following 267-residue polypeptide: MVSAKKTVLITGCSEGGMGAALAVAFKEAGFRVYATARDPSKMASLSRAGIETLTLDILSSESIATCASSVSSLDILVNNAGSSYSMPVADMDINYAKQLFDVNVWAQLAVSQAFLPHLIKSKGMISAYNASKAAISMFSDCQRLELEPFGVKVIDLKTGAVASNLIKNQKTLTPITLPRDSIYEPARDAVEAAMRNDKMADVGTPANQWAKEVVGDLTRKSPPLVIWRGANAKLGRFGTIMPHGMMDSTIKKMTGLDVVEQKVRVA.

Residues I10, T36, K42, D57, N80, Y129, K133, V162, and S164 each coordinate NADP(+). The active-site Proton acceptor is the Y129. Residue K133 is the Lowers pKa of active site Tyr of the active site.

This sequence belongs to the short-chain dehydrogenases/reductases (SDR) family.

The protein operates within secondary metabolite biosynthesis. Its function is as follows. Short-chain dehydrogenase/reductase; part of the gene cluster that mediates the biosynthesis of dibenzodioxocinones such as pestalotiollide B, a novel class of inhibitors against cholesterol ester transfer protein (CEPT). The biosynthesis initiates from condensation of acetate and malonate units catalyzed by the non-reducing PKS pks8/GME11356. Pks8/GME11356 lacks a thioesterase (TE) domain, which is important to the cyclizing of the third ring of atrochrysone carboxylic acid, and the esterase GME11355 might play the role of TE and catalyzes the cyclization reaction of the C ring. The lactamase-like protein GME11357 (or other beta-lactamases in Pestalotiopsis microspora) probably hydrolyzes the thioester bond between the ACP of pks8/GME11356 and the intermediate to release atrochrysone carboxylic acid, which is spontaneously dehydrates to form endocrocin anthrone. Endocrocin anthrone is further converted to emodin via the endocrocin intermediate. Emodin is then oxidized by several enzymes such as the Baeyer-Villiger oxidase GME11358, the oxidoreductase GME11367, the short chain dehydrogenase/reductase GME11373, as well as by other oxidoreductases from the cluster, to modify the A and C rings and open the B ring, and finally yield monodictyphenone. The prenyltransferase GME11375 may catalyze the addition reaction between the C5 side chains and the carbon bone of dibenzodioxocinones. The remaining biochemical reactions to the final product dibenzodioxocinones should be methylation catalyzed by methyltransferase GME11366 and reduction and lactonization reaction catalyzed by a series of oxidordeuctases. The chain is Short-chain dehydrogenase/reductase GME11361 from Pestalotiopsis microspora.